The primary structure comprises 138 residues: Protein X (138 aa).

The interval 20 to 43 (PLRGQPSGPSVSGTSAGSPSSAAS) is disordered. Positions 25 to 43 (PSGPSVSGTSAGSPSSAAS) are enriched in low complexity. Residues 68–113 (PCCLGFTCADLRTMDSTVNFVPWHAKRQLGMMQKDFWTAYIRDQLL) are mitochondrial targeting sequence.

The protein belongs to the orthohepadnavirus protein X family. In terms of assembly, may form homodimer. May interact with host CEBPA, CFLAR, CREB1, DDB1, E4F1, HBXIP, HSPD1/HSP60, NFKBIA, POLR2E and SMAD4. Interacts with host SMC5-SMC6 complex and induces its degradation. Interacts with host TRPC4AP; leading to prevent ubiquitination of TRPC4AP. Interacts with host PLSCR1; this interaction promotes ubiquitination and degradation of HBx and impairs HBx-mediated cell proliferation. Post-translationally, a fraction may be phosphorylated in insect cells and HepG2 cells, a human hepatoblastoma cell line. Phosphorylated in vitro by host protein kinase C or mitogen-activated protein kinase. N-acetylated in insect cells.

It is found in the host cytoplasm. Its subcellular location is the host nucleus. The protein localises to the host mitochondrion. Multifunctional protein that plays a role in silencing host antiviral defenses and promoting viral transcription. Does not seem to be essential for HBV infection. May be directly involved in development of cirrhosis and liver cancer (hepatocellular carcinoma). Most of cytosolic activities involve modulation of cytosolic calcium. The effect on apoptosis is controversial depending on the cell types in which the studies have been conducted. May induce apoptosis by localizing in mitochondria and causing loss of mitochondrial membrane potential. May also modulate apoptosis by binding host CFLAR, a key regulator of the death-inducing signaling complex (DISC). Promotes viral transcription by using the host E3 ubiquitin ligase DDB1 to target the SMC5-SMC6 complex to proteasomal degradation. This host complex would otherwise bind to viral episomal DNA, and prevents its transcription. Moderately stimulates transcription of many different viral and cellular transcription elements. Promoters and enhancers stimulated by HBx contain DNA binding sites for NF-kappa-B, AP-1, AP-2, c-EBP, ATF/CREB, or the calcium-activated factor NF-AT. The chain is Protein X from Ground squirrel hepatitis virus (strain 27) (GSHV).